Reading from the N-terminus, the 299-residue chain is Probable phosphate butyryltransferase (299 aa).

The protein belongs to the phosphate acetyltransferase and butyryltransferase family.

It catalyses the reaction butanoyl-CoA + phosphate = butanoyl phosphate + CoA. Its function is as follows. Catalyzes the conversion of butyryl-CoA through butyryl phosphate to butyrate. This chain is Probable phosphate butyryltransferase (yqiS), found in Bacillus subtilis (strain 168).